The primary structure comprises 415 residues: Glutamyl-tRNA reductase (415 aa).

Substrate-binding positions include 49–52 (TCNR), serine 104, 109–111 (EPQ), and glutamine 115. Residue cysteine 50 is the Nucleophile of the active site. 184–189 (GAGEMI) lines the NADP(+) pocket.

The protein belongs to the glutamyl-tRNA reductase family. Homodimer.

The catalysed reaction is (S)-4-amino-5-oxopentanoate + tRNA(Glu) + NADP(+) = L-glutamyl-tRNA(Glu) + NADPH + H(+). It participates in porphyrin-containing compound metabolism; protoporphyrin-IX biosynthesis; 5-aminolevulinate from L-glutamyl-tRNA(Glu): step 1/2. Its function is as follows. Catalyzes the NADPH-dependent reduction of glutamyl-tRNA(Glu) to glutamate 1-semialdehyde (GSA). This chain is Glutamyl-tRNA reductase, found in Neisseria meningitidis serogroup C (strain 053442).